The sequence spans 193 residues: Flagellar transcriptional regulator FlhC (193 aa).

Zn(2+) contacts are provided by cysteine 138, cysteine 141, cysteine 158, and cysteine 161.

This sequence belongs to the FlhC family. Heterohexamer composed of two FlhC and four FlhD subunits. Each FlhC binds a FlhD dimer, forming a heterotrimer, and a hexamer assembles by dimerization of two heterotrimers. It depends on Zn(2+) as a cofactor.

Its subcellular location is the cytoplasm. In terms of biological role, functions in complex with FlhD as a master transcriptional regulator that regulates transcription of several flagellar and non-flagellar operons by binding to their promoter region. Activates expression of class 2 flagellar genes, including fliA, which is a flagellum-specific sigma factor that turns on the class 3 genes. Also regulates genes whose products function in a variety of physiological pathways. The sequence is that of Flagellar transcriptional regulator FlhC from Yersinia enterocolitica.